A 130-amino-acid polypeptide reads, in one-letter code: Lysozyme C (130 aa).

Residues 1–130 (KVWERCALAR…VEQYVEGCDL (130 aa)) enclose the C-type lysozyme domain. Cystine bridges form between C6–C128, C30–C116, C65–C81, and C77–C95. Residues E35 and D53 contribute to the active site.

The protein belongs to the glycosyl hydrolase 22 family. In terms of assembly, monomer.

It catalyses the reaction Hydrolysis of (1-&gt;4)-beta-linkages between N-acetylmuramic acid and N-acetyl-D-glucosamine residues in a peptidoglycan and between N-acetyl-D-glucosamine residues in chitodextrins.. Lysozymes have primarily a bacteriolytic function; those in tissues and body fluids are associated with the monocyte-macrophage system and enhance the activity of immunoagents. The polypeptide is Lysozyme C (LYZ) (Camelus dromedarius (Dromedary)).